The following is a 235-amino-acid chain: MTKTQNVDPNEIKKFEDMASRWWDLEGEFKPLHQINPLRLDYVLSKADGLFGKKVLDVGCGGGILAESMAKEGAVVTGLDMGKEPLEVARLHALETGTKLTYIQSTIEDHAAENAQMYDVVTCMEMLEHVPDPLSVIRSCAALVKPGGHVFFSTLNRNIKSYLFAIVGAEKLLKIVPEGTHDHDKFIRPSELIKMIDQTDLCEQGITGLHYNPLSDTYKLGRNVDVNYIVHTQKF.

Arg-39, Gly-59, Asp-80, and Met-124 together coordinate S-adenosyl-L-methionine.

The protein belongs to the methyltransferase superfamily. UbiG/COQ3 family.

It catalyses the reaction a 3-demethylubiquinol + S-adenosyl-L-methionine = a ubiquinol + S-adenosyl-L-homocysteine + H(+). It carries out the reaction a 3-(all-trans-polyprenyl)benzene-1,2-diol + S-adenosyl-L-methionine = a 2-methoxy-6-(all-trans-polyprenyl)phenol + S-adenosyl-L-homocysteine + H(+). Its pathway is cofactor biosynthesis; ubiquinone biosynthesis. In terms of biological role, O-methyltransferase that catalyzes the 2 O-methylation steps in the ubiquinone biosynthetic pathway. This is Ubiquinone biosynthesis O-methyltransferase from Vibrio vulnificus (strain CMCP6).